Reading from the N-terminus, the 297-residue chain is Adrenocorticotropic hormone receptor (297 aa).

The Extracellular portion of the chain corresponds to 1 to 23 (MKHIIHASGNVNGTARNNSDCPH). Asparagine 12 and asparagine 17 each carry an N-linked (GlcNAc...) asparagine glycan. 2 disulfides stabilise this stretch: cysteine 21–cysteine 253 and cysteine 245–cysteine 251. The helical transmembrane segment at 24–49 (VALPEEIFFIISITGVLENLIIILAV) threads the bilayer. At 50-58 (IKNKNLQFP) the chain is on the cytoplasmic side. A helical transmembrane segment spans residues 59 to 79 (MYFFICSLAISDMLGSLYKIL). Residues 80–104 (ESILIMFRNMGYFKPHGSFETTTDD) are Extracellular-facing. Residues 105 to 126 (IIDTMFILSLLGSIFSLLAIAV) traverse the membrane as a helical segment. Residues 127-147 (DRYITIFHALQYHSIVTMHRT) are Cytoplasmic-facing. Residues 148-168 (IAVLSIIWTFCIGSGITMVLF) form a helical membrane-spanning segment. Topologically, residues 169–180 (SHHVPTVLTFTS) are extracellular. Residues 181–199 (LFPLMLVFILCLYVHMFLM) traverse the membrane as a helical segment. Residues 200–217 (ARSHARNISTLPRGNMRG) are Cytoplasmic-facing. The helical transmembrane segment at 218–244 (AITLTILLGVFIFCWAPFILHILLVTF) threads the bilayer. At 245-256 (CPNNPYCTCYIS) the chain is on the extracellular side. The helical transmembrane segment at 257-278 (LFHVNGMLIMCNAVIDPFIYAF) threads the bilayer. Topologically, residues 279-297 (RSPELRSAFRRMISYSKCL) are cytoplasmic. Cysteine 296 is lipidated: S-palmitoyl cysteine.

This sequence belongs to the G-protein coupled receptor 1 family. In terms of assembly, homodimer. Interacts with corticotropin (ACTH). Interacts with MRAP; this interaction targets MC2R to the plasma membrane. Interacts with MRAP2; competing with MRAP for binding to MC2R and impairing the binding of corticotropin (ACTH). In terms of processing, ubiquitinated by MGRN1 that may be involved in post-endocytic trafficking and/or degradation of internalized receptor.

Its subcellular location is the cell membrane. Its function is as follows. Hormone receptor primarily expressed in adrenal cortex that plays a key role in regulating adrenocortical function. Upon corticotropin (ACTH) binding, facilitates the release of adrenal glucocorticoids, including cortisol and corticosterone. In addition, MC2R is required for fetal and neonatal adrenal gland development. Mechanistically, activates adenylate cyclase (cAMP), the MAPK cascade as well as the cAMP-dependent protein kinase A pathway leading to steroidogenic factor 1/NR5A1-mediated transcriptional activation. In Cavia porcellus (Guinea pig), this protein is Adrenocorticotropic hormone receptor (MC2R).